The sequence spans 99 residues: Large ribosomal subunit protein uL23 (99 aa).

It belongs to the universal ribosomal protein uL23 family. As to quaternary structure, part of the 50S ribosomal subunit. Contacts protein L29, and trigger factor when it is bound to the ribosome.

In terms of biological role, one of the early assembly proteins it binds 23S rRNA. One of the proteins that surrounds the polypeptide exit tunnel on the outside of the ribosome. Forms the main docking site for trigger factor binding to the ribosome. This chain is Large ribosomal subunit protein uL23, found in Alkalilimnicola ehrlichii (strain ATCC BAA-1101 / DSM 17681 / MLHE-1).